Here is a 425-residue protein sequence, read N- to C-terminus: Serine--tRNA ligase (425 aa).

233–235 provides a ligand contact to L-serine; sequence TAE. 264 to 266 contacts ATP; sequence RRE. Glu-287 contributes to the L-serine binding site. 351-354 contacts ATP; sequence EVSS. An L-serine-binding site is contributed by Ser-386.

The protein belongs to the class-II aminoacyl-tRNA synthetase family. Type-1 seryl-tRNA synthetase subfamily. As to quaternary structure, homodimer. The tRNA molecule binds across the dimer.

It localises to the cytoplasm. The catalysed reaction is tRNA(Ser) + L-serine + ATP = L-seryl-tRNA(Ser) + AMP + diphosphate + H(+). It catalyses the reaction tRNA(Sec) + L-serine + ATP = L-seryl-tRNA(Sec) + AMP + diphosphate + H(+). Its pathway is aminoacyl-tRNA biosynthesis; selenocysteinyl-tRNA(Sec) biosynthesis; L-seryl-tRNA(Sec) from L-serine and tRNA(Sec): step 1/1. In terms of biological role, catalyzes the attachment of serine to tRNA(Ser). Is also able to aminoacylate tRNA(Sec) with serine, to form the misacylated tRNA L-seryl-tRNA(Sec), which will be further converted into selenocysteinyl-tRNA(Sec). The protein is Serine--tRNA ligase of Thermosipho melanesiensis (strain DSM 12029 / CIP 104789 / BI429).